A 127-amino-acid chain; its full sequence is Protein KRTCAP2 homolog (127 aa).

Helical transmembrane passes span 13–33 (LISL…SNFF), 41–61 (ILGG…IGAI), 65–85 (VKLL…SSVH), and 87–107 (VSGT…NHAS).

Belongs to the KRTCAP2 family. In terms of assembly, component of the oligosaccharyltransferase (OST) complex.

It is found in the membrane. Subunit of the oligosaccharyl transferase (OST) complex that catalyzes the initial transfer of a defined glycan (Glc(3)Man(9)GlcNAc(2) in eukaryotes) from the lipid carrier dolichol-pyrophosphate to an asparagine residue within an Asn-X-Ser/Thr consensus motif in nascent polypeptide chains, the first step in protein N-glycosylation. N-glycosylation occurs cotranslationally and the complex associates with the Sec61 complex at the channel-forming translocon complex that mediates protein translocation across the endoplasmic reticulum (ER). All subunits are required for a maximal enzyme activity. The sequence is that of Protein KRTCAP2 homolog from Dictyostelium discoideum (Social amoeba).